The primary structure comprises 353 residues: Dihydroorotate dehydrogenase (quinone) (353 aa).

Residues 66 to 70 and Thr-90 contribute to the FMN site; that span reads AGFDK. A substrate-binding site is contributed by Lys-70. 115-119 serves as a coordination point for substrate; that stretch reads NRMGF. FMN contacts are provided by Asn-143 and Asn-176. Asn-176 is a substrate binding site. Residue Ser-179 is the Nucleophile of the active site. Residue Asn-181 coordinates substrate. Residues Lys-212 and Thr-240 each contribute to the FMN site. Position 241–242 (241–242) interacts with substrate; it reads NT. FMN-binding positions include Gly-264, Gly-293, and 314–315; that span reads YT.

This sequence belongs to the dihydroorotate dehydrogenase family. Type 2 subfamily. As to quaternary structure, monomer. Requires FMN as cofactor.

The protein resides in the cell membrane. It catalyses the reaction (S)-dihydroorotate + a quinone = orotate + a quinol. It participates in pyrimidine metabolism; UMP biosynthesis via de novo pathway; orotate from (S)-dihydroorotate (quinone route): step 1/1. In terms of biological role, catalyzes the conversion of dihydroorotate to orotate with quinone as electron acceptor. The chain is Dihydroorotate dehydrogenase (quinone) from Mycolicibacterium gilvum (strain PYR-GCK) (Mycobacterium gilvum (strain PYR-GCK)).